We begin with the raw amino-acid sequence, 675 residues long: Methionine--tRNA ligase (675 aa).

The short motif at 15–25 (PYANGSIHLGH) is the 'HIGH' region element. Zn(2+) is bound by residues cysteine 146, cysteine 149, cysteine 159, and cysteine 162. A 'KMSKS' region motif is present at residues 332–336 (KMSKS). Residue lysine 335 participates in ATP binding. The region spanning 573–675 (DFAKIDMRIA…SGAKPGHQVK (103 aa)) is the tRNA-binding domain.

This sequence belongs to the class-I aminoacyl-tRNA synthetase family. MetG type 1 subfamily. As to quaternary structure, homodimer. Zn(2+) is required as a cofactor.

Its subcellular location is the cytoplasm. The catalysed reaction is tRNA(Met) + L-methionine + ATP = L-methionyl-tRNA(Met) + AMP + diphosphate. Its function is as follows. Is required not only for elongation of protein synthesis but also for the initiation of all mRNA translation through initiator tRNA(fMet) aminoacylation. The polypeptide is Methionine--tRNA ligase (Proteus mirabilis (strain HI4320)).